The sequence spans 467 residues: tRNA-2-methylthio-N(6)-dimethylallyladenosine synthase (467 aa).

Residues 22-138 (GSYWITTFGC…LETLLNKVET (117 aa)) enclose the MTTase N-terminal domain. Residues Cys-31, Cys-67, Cys-101, Cys-173, Cys-177, and Cys-180 each coordinate [4Fe-4S] cluster. One can recognise a Radical SAM core domain in the interval 159–396 (RDSSICAWVN…NSLVEIKAKE (238 aa)). A TRAM domain is found at 399-467 (VRYKDRVEEV…AFSLSGVIEN (69 aa)).

The protein belongs to the methylthiotransferase family. MiaB subfamily. Monomer. The cofactor is [4Fe-4S] cluster.

Its subcellular location is the cytoplasm. The enzyme catalyses N(6)-dimethylallyladenosine(37) in tRNA + (sulfur carrier)-SH + AH2 + 2 S-adenosyl-L-methionine = 2-methylsulfanyl-N(6)-dimethylallyladenosine(37) in tRNA + (sulfur carrier)-H + 5'-deoxyadenosine + L-methionine + A + S-adenosyl-L-homocysteine + 2 H(+). Catalyzes the methylthiolation of N6-(dimethylallyl)adenosine (i(6)A), leading to the formation of 2-methylthio-N6-(dimethylallyl)adenosine (ms(2)i(6)A) at position 37 in tRNAs that read codons beginning with uridine. The protein is tRNA-2-methylthio-N(6)-dimethylallyladenosine synthase of Prochlorococcus marinus (strain MIT 9211).